The primary structure comprises 269 residues: Undecaprenyl-diphosphatase (269 aa).

A run of 7 helical transmembrane segments spans residues 41 to 61 (FATMFEIVIQLGAILAVVFHY), 78 to 98 (GFNLWFKIFIAFIPAAVIGLL), 107 to 127 (LFSPFTVAIALIAGAIMMIVI), 148 to 167 (SLLIGIAQVMSLFPGMSRSA), 184 to 204 (AEFSFFLAIPTMFAATTLSLL), 213 to 233 (LEWQALAVGFITSFLTALFVV), and 248 to 268 (FAYYRLAVGVLMILLVAEKIV).

The protein belongs to the UppP family.

It localises to the cell membrane. The enzyme catalyses di-trans,octa-cis-undecaprenyl diphosphate + H2O = di-trans,octa-cis-undecaprenyl phosphate + phosphate + H(+). Catalyzes the dephosphorylation of undecaprenyl diphosphate (UPP). Confers resistance to bacitracin. The sequence is that of Undecaprenyl-diphosphatase from Thermoanaerobacter pseudethanolicus (strain ATCC 33223 / 39E) (Clostridium thermohydrosulfuricum).